The sequence spans 163 residues: Protein-export protein SecB (163 aa).

It belongs to the SecB family. Homotetramer, a dimer of dimers. One homotetramer interacts with 1 SecA dimer.

The protein resides in the cytoplasm. Its function is as follows. One of the proteins required for the normal export of preproteins out of the cell cytoplasm. It is a molecular chaperone that binds to a subset of precursor proteins, maintaining them in a translocation-competent state. It also specifically binds to its receptor SecA. The protein is Protein-export protein SecB of Shewanella woodyi (strain ATCC 51908 / MS32).